The chain runs to 400 residues: Nicotinate phosphoribosyltransferase (400 aa).

The residue at position 220 (His-220) is a Phosphohistidine; by autocatalysis.

The protein belongs to the NAPRTase family. In terms of processing, transiently phosphorylated on a His residue during the reaction cycle. Phosphorylation strongly increases the affinity for substrates and increases the rate of nicotinate D-ribonucleotide production. Dephosphorylation regenerates the low-affinity form of the enzyme, leading to product release.

The catalysed reaction is nicotinate + 5-phospho-alpha-D-ribose 1-diphosphate + ATP + H2O = nicotinate beta-D-ribonucleotide + ADP + phosphate + diphosphate. The protein operates within cofactor biosynthesis; NAD(+) biosynthesis; nicotinate D-ribonucleotide from nicotinate: step 1/1. Its function is as follows. Catalyzes the synthesis of beta-nicotinate D-ribonucleotide from nicotinate and 5-phospho-D-ribose 1-phosphate at the expense of ATP. This Escherichia coli O157:H7 protein is Nicotinate phosphoribosyltransferase.